The sequence spans 336 residues: MEAIINPIITKLYEQESLTQEESQQLFDIIIRGELDPILMASALTALKIKGETPDEIAGAAKALLANANPFPRPDYDFADIVGTGGDGHNTINISTTAAFVAAACGLKVAKHGNRSVSSKSGSSDLLDSFGINLAMSAEDTRKAVDEIGVAFLFAPQYHGGVRHAMPVRQTMKTRTIFNILGPLINPARPNIELMGVYSEELVRPIAETMLQMSMKRAAVVHGSGLDEVAIHGETTVAEIKDGKITEYTLTPADFGLEPHPLEAIKGGVPEENKAIITNILTGKGTDAQLGAVAVNVALLMRLFGHEDLKANTQQAVEAMNSGEAYQLVQQLAAHA.

5-phospho-alpha-D-ribose 1-diphosphate contacts are provided by residues glycine 83, 86–87 (GD), threonine 91, 93–96 (NIST), 111–119 (KHGNRSVSS), and serine 123. Residue glycine 83 participates in anthranilate binding. Serine 95 is a Mg(2+) binding site. Asparagine 114 serves as a coordination point for anthranilate. Arginine 169 contributes to the anthranilate binding site. Aspartate 227 and glutamate 228 together coordinate Mg(2+).

Belongs to the anthranilate phosphoribosyltransferase family. Homodimer. Mg(2+) is required as a cofactor.

The catalysed reaction is N-(5-phospho-beta-D-ribosyl)anthranilate + diphosphate = 5-phospho-alpha-D-ribose 1-diphosphate + anthranilate. It functions in the pathway amino-acid biosynthesis; L-tryptophan biosynthesis; L-tryptophan from chorismate: step 2/5. Functionally, catalyzes the transfer of the phosphoribosyl group of 5-phosphorylribose-1-pyrophosphate (PRPP) to anthranilate to yield N-(5'-phosphoribosyl)-anthranilate (PRA). This Vibrio campbellii (strain ATCC BAA-1116) protein is Anthranilate phosphoribosyltransferase.